The chain runs to 336 residues: MKFLDQAKIYVRSGDGGDGVIAFRREKYIEFGGPDGGDGGRGGDIIFRAVPGLNTLIDFRYTQHFKARKGGNGAGSNRTGAAAANVTINVPVGTQIFDEDRETLLADLDAEGKEVLLCRGGDGGLGNTHFKSSTNRAPRRADKGWPGEERWVWLRLKLIADIGLVGLPNAGKSTLLSVASRARPKIADYPFTTLHPQLGVVRLNNTEEFVIADIPGLIEGASEGAGLGDRFLGHVERCATLLHLIDGTESQIVKHWRLIRKELEAYDPELAAKPEIIVLNKCDSLTPTQRSAKKRALAKASGAEVMMLSGATQEGLPELLRLLQDRVTAAKRDRQG.

Residues 1–159 form the Obg domain; that stretch reads MKFLDQAKIY…RWVWLRLKLI (159 aa). Positions 160 to 328 constitute an OBG-type G domain; the sequence is ADIGLVGLPN…LLRLLQDRVT (169 aa). Residues 166–173, 191–195, 213–216, 280–283, and 309–311 contribute to the GTP site; these read GLPNAGKS, FTTLH, DIPG, NKCD, and SGA. S173 and T193 together coordinate Mg(2+).

This sequence belongs to the TRAFAC class OBG-HflX-like GTPase superfamily. OBG GTPase family. As to quaternary structure, monomer. Requires Mg(2+) as cofactor.

Its subcellular location is the cytoplasm. In terms of biological role, an essential GTPase which binds GTP, GDP and possibly (p)ppGpp with moderate affinity, with high nucleotide exchange rates and a fairly low GTP hydrolysis rate. Plays a role in control of the cell cycle, stress response, ribosome biogenesis and in those bacteria that undergo differentiation, in morphogenesis control. This chain is GTPase Obg, found in Gluconobacter oxydans (strain 621H) (Gluconobacter suboxydans).